Consider the following 243-residue polypeptide: R-spondin-2 (243 aa).

The N-terminal stretch at methionine 1–cysteine 21 is a signal peptide. Cystine bridges form between cysteine 40–cysteine 46, cysteine 43–cysteine 52, cysteine 55–cysteine 74, cysteine 78–cysteine 93, cysteine 96–cysteine 104, cysteine 101–cysteine 110, cysteine 113–cysteine 124, cysteine 128–cysteine 141, cysteine 145–cysteine 187, cysteine 156–cysteine 163, and cysteine 196–cysteine 203. The FU repeat unit spans residues methionine 90–proline 134. The TSP type-1 domain maps to glycine 144 to proline 204. Asparagine 160 carries an N-linked (GlcNAc...) asparagine glycan. The segment covering proline 204–leucine 224 has biased composition (basic residues). Residues proline 204–glutamine 243 are disordered.

It belongs to the R-spondin family. As to quaternary structure, interacts with WNT1. Binds heparin. Interacts with LGR4, LGR5 and LGR6. Interacts with E3 ubiquitin ligases RNF43 and ZNRF3.

It localises to the secreted. Activator of the canonical Wnt signaling pathway by acting as a ligand for LGR4-6 receptors. Upon binding to LGR4-6 (LGR4, LGR5 or LGR6), LGR4-6 associate with phosphorylated LRP6 and frizzled receptors that are activated by extracellular Wnt receptors, triggering the canonical Wnt signaling pathway to increase expression of target genes. Also regulates the canonical Wnt/beta-catenin-dependent pathway and non-canonical Wnt signaling by acting as an inhibitor of ZNRF3, an important regulator of the Wnt signaling pathway. During embryonic development, plays a crucial role in limb specification, amplifying the Wnt signaling pathway independently of LGR4-6 receptors, possibly by acting as a direct antagonistic ligand to RNF43 and ZNRF3, hence governing the number of limbs an embryo should form. The protein is R-spondin-2 (RSPO2) of Homo sapiens (Human).